A 117-amino-acid polypeptide reads, in one-letter code: Immunoglobulin kappa variable 1-17 (117 aa).

Residues 1 to 22 (MDMRVPAQLLGLLLLWFPGARC) form the signal peptide. Residues 23 to 45 (DIQMTQSPSSLSASVGDRVTITC) are framework-1. The 94-residue stretch at 24-117 (IQMTQSPSSL…YYCLQHNSYP (94 aa)) folds into the Ig-like domain. Cysteine 45 and cysteine 110 form a disulfide bridge. Residues 46–56 (RASQGIRNDLG) form a complementarity-determining-1 region. The interval 57-71 (WYQQKPGKAPKRLIY) is framework-2. Positions 72–78 (AASSLQS) are complementarity-determining-2. Residues 79 to 110 (GVPSRFSGSGSGTEFTLTISSLQPEDFATYYC) are framework-3. The complementarity-determining-3 stretch occupies residues 111 to 117 (LQHNSYP).

In terms of assembly, immunoglobulins are composed of two identical heavy chains and two identical light chains; disulfide-linked.

It is found in the secreted. It localises to the cell membrane. Its function is as follows. V region of the variable domain of immunoglobulin light chains that participates in the antigen recognition. Immunoglobulins, also known as antibodies, are membrane-bound or secreted glycoproteins produced by B lymphocytes. In the recognition phase of humoral immunity, the membrane-bound immunoglobulins serve as receptors which, upon binding of a specific antigen, trigger the clonal expansion and differentiation of B lymphocytes into immunoglobulins-secreting plasma cells. Secreted immunoglobulins mediate the effector phase of humoral immunity, which results in the elimination of bound antigens. The antigen binding site is formed by the variable domain of one heavy chain, together with that of its associated light chain. Thus, each immunoglobulin has two antigen binding sites with remarkable affinity for a particular antigen. The variable domains are assembled by a process called V-(D)-J rearrangement and can then be subjected to somatic hypermutations which, after exposure to antigen and selection, allow affinity maturation for a particular antigen. In Homo sapiens (Human), this protein is Immunoglobulin kappa variable 1-17.